A 295-amino-acid polypeptide reads, in one-letter code: MANLKDIQRQIKSVSNTQKTTRAMKLVSTAKLRRAEELAKRSRLYAAKMNQVIAEIAGRIRCNKVGGIDNRCFSKIEDPKTVDIIFVTADKGLCGGFNIQTIKAVKKLLSEYKAKNVKVRLRGIGKKGVEFFKYNEVELFDSVSNLSSKPDKEKSDEFILSSIEDFKDGKIDALYLVYNGYKNMITQELHVSKIFPVDATLYECDEPEKSMLEVEAQDEEKMLDSLVNRYAQYAMYYSLIDSVAAEHSARMQAMDTATNNAKEMVKSLNVQFNKARQAAITTELIEIISGVESMK.

This sequence belongs to the ATPase gamma chain family. F-type ATPases have 2 components, CF(1) - the catalytic core - and CF(0) - the membrane proton channel. CF(1) has five subunits: alpha(3), beta(3), gamma(1), delta(1), epsilon(1). CF(0) has three main subunits: a, b and c.

It localises to the cell inner membrane. Functionally, produces ATP from ADP in the presence of a proton gradient across the membrane. The gamma chain is believed to be important in regulating ATPase activity and the flow of protons through the CF(0) complex. This is ATP synthase gamma chain from Sulfurimonas denitrificans (strain ATCC 33889 / DSM 1251) (Thiomicrospira denitrificans (strain ATCC 33889 / DSM 1251)).